The sequence spans 220 residues: ATP synthase F(0) complex subunit a (220 aa).

6 consecutive transmembrane segments (helical) span residues 12–32 (PTLLGVPLIAVAMMFPWTLLP), 69–89 (WAMILMSLNLLGLLPYTFTPT), 91–111 (QLSLNMGLAIPFWLATVLLGL), 130–150 (LLIPILIIIETISLLIRPFAL), 158–178 (LTAGHLLMQLIATAAFVLLPM), and 183–203 (ALLTTLVLFLLTLLEIAVAMI).

It belongs to the ATPase A chain family. In terms of assembly, component of the ATP synthase complex composed at least of ATP5F1A/subunit alpha, ATP5F1B/subunit beta, ATP5MC1/subunit c (homooctomer), MT-ATP6/subunit a, MT-ATP8/subunit 8, ATP5ME/subunit e, ATP5MF/subunit f, ATP5MG/subunit g, ATP5MK/subunit k, ATP5MJ/subunit j, ATP5F1C/subunit gamma, ATP5F1D/subunit delta, ATP5F1E/subunit epsilon, ATP5PF/subunit F6, ATP5PB/subunit b, ATP5PD/subunit d, ATP5PO/subunit OSCP. ATP synthase complex consists of a soluble F(1) head domain (subunits alpha(3) and beta(3)) - the catalytic core - and a membrane F(0) domain - the membrane proton channel (subunits c, a, 8, e, f, g, k and j). These two domains are linked by a central stalk (subunits gamma, delta, and epsilon) rotating inside the F1 region and a stationary peripheral stalk (subunits F6, b, d, and OSCP). Interacts with DNAJC30; interaction is direct.

The protein localises to the mitochondrion inner membrane. It catalyses the reaction H(+)(in) = H(+)(out). Its function is as follows. Subunit a, of the mitochondrial membrane ATP synthase complex (F(1)F(0) ATP synthase or Complex V) that produces ATP from ADP in the presence of a proton gradient across the membrane which is generated by electron transport complexes of the respiratory chain. ATP synthase complex consist of a soluble F(1) head domain - the catalytic core - and a membrane F(1) domain - the membrane proton channel. These two domains are linked by a central stalk rotating inside the F(1) region and a stationary peripheral stalk. During catalysis, ATP synthesis in the catalytic domain of F(1) is coupled via a rotary mechanism of the central stalk subunits to proton translocation. With the subunit c (ATP5MC1), forms the proton-conducting channel in the F(0) domain, that contains two crucial half-channels (inlet and outlet) that facilitate proton movement from the mitochondrial intermembrane space (IMS) into the matrix. Protons are taken up via the inlet half-channel and released through the outlet half-channel, following a Grotthuss mechanism. This is ATP synthase F(0) complex subunit a from Latimeria chalumnae (Coelacanth).